The chain runs to 444 residues: MKVLLIGGGAREHAIAMALKKNELVELYTLMKNKNPGIYAISDEVSFNSETDVPAIKEFAEKIKPELAVIGPEAPLGVGAADLLIEMGIPTVGPKKLPAQIETSKEFMRNLFKKYEIDGSLRYAAFNEYGNDLETFIDEMTSLGKDVVVKPAGLTGGKGVKVVGEQLKDNEEAKIYAKEVFDKSIGGGNIIIEEKLVGVEFTLHGFVDGENIVFMPAVQDHPHAYNNDEGPITGGMGSYSCPNHGLPFLSAEMLDRAEKIMEKTVSSINSEVGPYNGFLYGQFMLTADGPKIIEYNARFGDPEAMNLLPILKTDFLDVCFAIAEGKLDKINLEFENKATVCKYVVPNGYPIDPVRNKELTVDEKAIENADAILFYASINEKNGKLYITGSRSAAVVGISENIEEAEKIAQMAIENFKGEVYYRSDIGTLGLIKKRIERVKQLAK.

One can recognise an ATP-grasp domain in the interval Arg-109–Glu-324. Met-140–Thr-202 lines the ATP pocket. The Mg(2+) site is built by Gln-282, Glu-294, and Asn-296. Mn(2+) contacts are provided by Gln-282, Glu-294, and Asn-296.

It belongs to the GARS family. Requires Mg(2+) as cofactor. Mn(2+) is required as a cofactor.

The enzyme catalyses 5-phospho-beta-D-ribosylamine + glycine + ATP = N(1)-(5-phospho-beta-D-ribosyl)glycinamide + ADP + phosphate + H(+). It functions in the pathway purine metabolism; IMP biosynthesis via de novo pathway; N(1)-(5-phospho-D-ribosyl)glycinamide from 5-phospho-alpha-D-ribose 1-diphosphate: step 2/2. In Methanococcus maripaludis (strain C5 / ATCC BAA-1333), this protein is Phosphoribosylamine--glycine ligase.